The following is a 207-amino-acid chain: Ribosomal RNA small subunit methyltransferase G (207 aa).

Residues Gly-76, Gln-81, Val-127–Glu-128, and Arg-141 each bind S-adenosyl-L-methionine.

This sequence belongs to the methyltransferase superfamily. RNA methyltransferase RsmG family.

Its subcellular location is the cytoplasm. The catalysed reaction is guanosine(527) in 16S rRNA + S-adenosyl-L-methionine = N(7)-methylguanosine(527) in 16S rRNA + S-adenosyl-L-homocysteine. Functionally, specifically methylates the N7 position of guanine in position 527 of 16S rRNA. The chain is Ribosomal RNA small subunit methyltransferase G from Neisseria meningitidis serogroup C / serotype 2a (strain ATCC 700532 / DSM 15464 / FAM18).